Here is a 360-residue protein sequence, read N- to C-terminus: MKASLLNKLEILQDRFEELTALLGDAEVISDQTRFRAYSREYAEVEPVYAAYKEWRKVQDDLEGAQALLKDSDPDLREMALEEVREAKEQLLTLEAQLQRMLLPKDPNDGRNVFLEIRAGTGGDEAAIFSGDLFRMYSRYAEKRGWRLEILSENEGEHGGYKEIIARVEGENVYGKLKFESGAHRVQRVPETESQGRVHTSACTVAVLPEPDEQAAIEINPADLRVDTYRASGAGGQHVNKTDSAIRITHLPTGIVVECQEERSQHKNRARAMSWLSAKLNDMQTSAAQNAIASERKLLVGSGDRSERIRTYNYPQGRVTDHRINLTLYSLDDILSGGVDAVIEPLLAEYQADQLAALGD.

Gln237 is subject to N5-methylglutamine.

It belongs to the prokaryotic/mitochondrial release factor family. In terms of processing, methylated by PrmC. Methylation increases the termination efficiency of RF1.

The protein resides in the cytoplasm. Peptide chain release factor 1 directs the termination of translation in response to the peptide chain termination codons UAG and UAA. This Pseudomonas putida (strain ATCC 700007 / DSM 6899 / JCM 31910 / BCRC 17059 / LMG 24140 / F1) protein is Peptide chain release factor 1.